A 411-amino-acid chain; its full sequence is Argininosuccinate synthase (411 aa).

Residues 13–21 and Ala40 contribute to the ATP site; that span reads AYSGGLDTS. Tyr91 and Ser96 together coordinate L-citrulline. Gly121 contacts ATP. L-aspartate is bound by residues Thr123, Asn127, and Asp128. Residue Asn127 coordinates L-citrulline. L-citrulline is bound by residues Arg131, Ser182, Ser191, Glu267, and Tyr279.

This sequence belongs to the argininosuccinate synthase family. Type 1 subfamily. Homotetramer.

The protein resides in the cytoplasm. The enzyme catalyses L-citrulline + L-aspartate + ATP = 2-(N(omega)-L-arginino)succinate + AMP + diphosphate + H(+). Its pathway is amino-acid biosynthesis; L-arginine biosynthesis; L-arginine from L-ornithine and carbamoyl phosphate: step 2/3. The protein is Argininosuccinate synthase of Bartonella tribocorum (strain CIP 105476 / IBS 506).